The following is a 231-amino-acid chain: 7-cyano-7-deazaguanine synthase (231 aa).

ATP is bound at residue 7–17; it reads LSSGLDSVAAL. Cys-195, Cys-203, Cys-206, and Cys-209 together coordinate Zn(2+).

This sequence belongs to the QueC family. Zn(2+) serves as cofactor.

The catalysed reaction is 7-carboxy-7-deazaguanine + NH4(+) + ATP = 7-cyano-7-deazaguanine + ADP + phosphate + H2O + H(+). The protein operates within purine metabolism; 7-cyano-7-deazaguanine biosynthesis. Its function is as follows. Catalyzes the ATP-dependent conversion of 7-carboxy-7-deazaguanine (CDG) to 7-cyano-7-deazaguanine (preQ(0)). The sequence is that of 7-cyano-7-deazaguanine synthase from Methanosarcina mazei (strain ATCC BAA-159 / DSM 3647 / Goe1 / Go1 / JCM 11833 / OCM 88) (Methanosarcina frisia).